Reading from the N-terminus, the 157-residue chain is 6,7-dimethyl-8-ribityllumazine synthase (157 aa).

5-amino-6-(D-ribitylamino)uracil contacts are provided by residues Phe23, 57–59, and 81–83; these read AFE and AVI. 86-87 contacts (2S)-2-hydroxy-3-oxobutyl phosphate; that stretch reads AT. The Proton donor role is filled by His89. Phe114 serves as a coordination point for 5-amino-6-(D-ribitylamino)uracil. Arg128 is a (2S)-2-hydroxy-3-oxobutyl phosphate binding site.

Belongs to the DMRL synthase family.

The catalysed reaction is (2S)-2-hydroxy-3-oxobutyl phosphate + 5-amino-6-(D-ribitylamino)uracil = 6,7-dimethyl-8-(1-D-ribityl)lumazine + phosphate + 2 H2O + H(+). It participates in cofactor biosynthesis; riboflavin biosynthesis; riboflavin from 2-hydroxy-3-oxobutyl phosphate and 5-amino-6-(D-ribitylamino)uracil: step 1/2. Its function is as follows. Catalyzes the formation of 6,7-dimethyl-8-ribityllumazine by condensation of 5-amino-6-(D-ribitylamino)uracil with 3,4-dihydroxy-2-butanone 4-phosphate. This is the penultimate step in the biosynthesis of riboflavin. The polypeptide is 6,7-dimethyl-8-ribityllumazine synthase (Desulforapulum autotrophicum (strain ATCC 43914 / DSM 3382 / VKM B-1955 / HRM2) (Desulfobacterium autotrophicum)).